Reading from the N-terminus, the 301-residue chain is Homeobox protein Nkx-2.6 (301 aa).

The segment at 22–135 (ERSCPAASPH…QPKARQRRKP (114 aa)) is disordered. Residues 132-191 (RRKPRVLFSQAQVLALERRFKQQRYLSAPEREHLASALQLTSTQVKIWFQNRRYKCKRQR) constitute a DNA-binding region (homeobox).

It belongs to the NK-2 homeobox family.

The protein localises to the nucleus. Acts as a transcriptional activator. In conjunction with NKX2-5, may play a role in both pharyngeal and cardiac embryonic development. In Homo sapiens (Human), this protein is Homeobox protein Nkx-2.6 (NKX2-6).